The primary structure comprises 156 residues: Small ribosomal subunit protein uS7 (156 aa).

The protein belongs to the universal ribosomal protein uS7 family. Part of the 30S ribosomal subunit. Contacts proteins S9 and S11.

One of the primary rRNA binding proteins, it binds directly to 16S rRNA where it nucleates assembly of the head domain of the 30S subunit. Is located at the subunit interface close to the decoding center, probably blocks exit of the E-site tRNA. The polypeptide is Small ribosomal subunit protein uS7 (Thermodesulfovibrio yellowstonii (strain ATCC 51303 / DSM 11347 / YP87)).